The chain runs to 487 residues: Betaine aldehyde dehydrogenase (487 aa).

2 residues coordinate K(+): Ile-27 and Asp-93. 149 to 151 (GAW) lines the NAD(+) pocket. The active-site Charge relay system is Lys-161. Residues 175 to 178 (KPSE) and 228 to 231 (SVPT) each bind NAD(+). K(+) is bound at residue Leu-243. Glu-249 (proton acceptor) is an active-site residue. Gly-251, Cys-283, and Glu-384 together coordinate NAD(+). The Nucleophile role is filled by Cys-283. Cys-283 is subject to Cysteine sulfenic acid (-SOH). 2 residues coordinate K(+): Lys-454 and Gly-457. Catalysis depends on Glu-461, which acts as the Charge relay system.

It belongs to the aldehyde dehydrogenase family. As to quaternary structure, dimer of dimers. Requires K(+) as cofactor.

The catalysed reaction is betaine aldehyde + NAD(+) + H2O = glycine betaine + NADH + 2 H(+). The protein operates within amine and polyamine biosynthesis; betaine biosynthesis via choline pathway; betaine from betaine aldehyde: step 1/1. Functionally, involved in the biosynthesis of the osmoprotectant glycine betaine. Catalyzes the irreversible oxidation of betaine aldehyde to the corresponding acid. This is Betaine aldehyde dehydrogenase from Brucella melitensis biotype 2 (strain ATCC 23457).